The chain runs to 454 residues: MTKREAEELIEIEIDGTEKAECTEESIVEQTYAPAECVSQAIDINEPIGNLKKLLEPRLQCSLDAHEICLQDIQLDPERSLFDQGVKTDGTVQLSVQVISYQGIEPKLNILEIVKPADTVEVVIDPDAHHAESEAHLVEEAQVITLDGTKHITTISDETSEQVTRWAAALEGYRKEQERLGIPYDPIQWSTDQVLHWVVWVMKEFSMTDIDLTTLNISGRELCSLNQEDFFQRVPRGEILWSHLELLRKYVLASQEQQMNEIVTIDQPVQIIPASVQSATPTTIKVINSSAKAAKVQRAPRISGEDRSSPGNRTGNNGQIQLWQFLLELLTDKDARDCISWVGDEGEFKLNQPELVAQKWGQRKNKPTMNYEKLSRALRYYYDGDMICKVQGKRFVYKFVCDLKTLIGYSAAELNRLVTECEQKKLAKMQLHGIAQPVTAVALATASLQTEKDN.

A PNT domain is found at 168-251; that stretch reads AALEGYRKEQ…SHLELLRKYV (84 aa). A disordered region spans residues 297-316; that stretch reads QRAPRISGEDRSSPGNRTGN. Ser-303 carries the phosphoserine modification. A DNA-binding region (ETS) is located at residues 320–400; sequence IQLWQFLLEL…QGKRFVYKFV (81 aa).

The protein belongs to the ETS family. In terms of assembly, heterotetramer of two alpha and two beta subunits.

It localises to the nucleus. In terms of biological role, transcription factor capable of interacting with purine rich repeats (GA repeats). Positively regulates transcription of transcriptional repressor RHIT/ZNF205. Functionally, (Microbial infection) Necessary for the expression of the Adenovirus E4 gene. The sequence is that of GA-binding protein alpha chain (GABPA) from Homo sapiens (Human).